We begin with the raw amino-acid sequence, 151 residues long: UPF0178 protein RD1_0321 (151 aa).

It belongs to the UPF0178 family.

The protein is UPF0178 protein RD1_0321 of Roseobacter denitrificans (strain ATCC 33942 / OCh 114) (Erythrobacter sp. (strain OCh 114)).